We begin with the raw amino-acid sequence, 236 residues long: Protein-L-isoaspartate O-methyltransferase 1 (236 aa).

Ser85 is an active-site residue.

Belongs to the methyltransferase superfamily. L-isoaspartyl/D-aspartyl protein methyltransferase family.

Its subcellular location is the cytoplasm. It carries out the reaction [protein]-L-isoaspartate + S-adenosyl-L-methionine = [protein]-L-isoaspartate alpha-methyl ester + S-adenosyl-L-homocysteine. Functionally, catalyzes the methyl esterification of L-isoaspartyl residues in peptides and proteins that result from spontaneous decomposition of normal L-aspartyl and L-asparaginyl residues. It plays a role in the repair and/or degradation of damaged proteins. This chain is Protein-L-isoaspartate O-methyltransferase 1, found in Polaromonas sp. (strain JS666 / ATCC BAA-500).